The following is a 91-amino-acid chain: Small ribosomal subunit protein uS19 (91 aa).

It belongs to the universal ribosomal protein uS19 family.

In terms of biological role, protein S19 forms a complex with S13 that binds strongly to the 16S ribosomal RNA. The chain is Small ribosomal subunit protein uS19 from Erythrobacter litoralis (strain HTCC2594).